Here is a 105-residue protein sequence, read N- to C-terminus: Imizoquin biosynthesis cluster protein I (105 aa).

Positions 1 to 15 (MSSGEPTTMTPSPSE) are enriched in polar residues. The interval 1-43 (MSSGEPTTMTPSPSERTPLLSNGSGGAADDGGTTVTISKPNDG) is disordered.

It functions in the pathway secondary metabolite biosynthesis. Part of the gene cluster that mediates the biosynthesis of imizoquins A to D, tripeptide-derived alkaloids that serve a protective role against oxidative stress that are essential for normal germination. ImqB is a canonical three-module NRPS that assembles the tripeptide backbone of the imizoquins via condensation of Trp, Tyr, and Leu-derived precursors. N-methylation by imqF and phenol oxidation by imqC, followed by cyclization via the FAD-dependent oxidase imqH carry out the three-step transformation of L-tyrosine into tetrahydroisoquinoline. Importantly, this sequence requires the presence of a free amine in the tyrosine moiety, indicating that isoquinoline formation occurs prior to peptide bond formation. The imidazolidin-4-one ring of imizoquins could form following additional oxidation of the methyl-derived bridgehead carbon by imqH. Lastly, O-methylation by imqG and leucine hydroxylation by imqE complete biosynthesis of the imizoquins. This is Imizoquin biosynthesis cluster protein I from Aspergillus flavus (strain ATCC 200026 / FGSC A1120 / IAM 13836 / NRRL 3357 / JCM 12722 / SRRC 167).